Here is a 310-residue protein sequence, read N- to C-terminus: Ribonuclease Z (310 aa).

Zn(2+) is bound by residues His61, His63, Asp65, His66, and His139. Asp65 serves as the catalytic Proton acceptor. Positions 150-175 (EDDRPGRFDRPKAEELGVPVGPKFGR) are disordered. The segment covering 153–164 (RPGRFDRPKAEE) has biased composition (basic and acidic residues). The Zn(2+) site is built by Asp210 and His268.

Belongs to the RNase Z family. In terms of assembly, homodimer. It depends on Zn(2+) as a cofactor.

The catalysed reaction is Endonucleolytic cleavage of RNA, removing extra 3' nucleotides from tRNA precursor, generating 3' termini of tRNAs. A 3'-hydroxy group is left at the tRNA terminus and a 5'-phosphoryl group is left at the trailer molecule.. Zinc phosphodiesterase, which displays some tRNA 3'-processing endonuclease activity. Probably involved in tRNA maturation, by removing a 3'-trailer from precursor tRNA. This chain is Ribonuclease Z, found in Halorubrum lacusprofundi (strain ATCC 49239 / DSM 5036 / JCM 8891 / ACAM 34).